The sequence spans 48 residues: Sperm protamine P1 (48 aa).

Belongs to the protamine P1 family. In terms of tissue distribution, testis.

The protein resides in the nucleus. It localises to the chromosome. Functionally, protamines substitute for histones in the chromatin of sperm during the haploid phase of spermatogenesis. They compact sperm DNA into a highly condensed, stable and inactive complex. The sequence is that of Sperm protamine P1 (PRM1) from Murina cyclotis (Round-eared tube-nosed bat).